The primary structure comprises 459 residues: Taurine--pyruvate aminotransferase (459 aa).

Residue Lys-287 is modified to N6-(pyridoxal phosphate)lysine.

Belongs to the class-III pyridoxal-phosphate-dependent aminotransferase family. Pyridoxal 5'-phosphate serves as cofactor.

It is found in the cytoplasm. It catalyses the reaction taurine + pyruvate = sulfoacetaldehyde + L-alanine. Its pathway is organosulfur degradation; taurine degradation via aerobic pathway; acetyl phosphate and sulfite from taurine: step 1/2. In terms of biological role, catalyzes the degradation of taurine into alanine and sulfoacetaldehyde. The polypeptide is Taurine--pyruvate aminotransferase (Rhodobacter capsulatus (strain ATCC BAA-309 / NBRC 16581 / SB1003)).